The primary structure comprises 343 residues: S-adenosylmethionine:tRNA ribosyltransferase-isomerase (343 aa).

It belongs to the QueA family. In terms of assembly, monomer.

It localises to the cytoplasm. The enzyme catalyses 7-aminomethyl-7-carbaguanosine(34) in tRNA + S-adenosyl-L-methionine = epoxyqueuosine(34) in tRNA + adenine + L-methionine + 2 H(+). It functions in the pathway tRNA modification; tRNA-queuosine biosynthesis. Functionally, transfers and isomerizes the ribose moiety from AdoMet to the 7-aminomethyl group of 7-deazaguanine (preQ1-tRNA) to give epoxyqueuosine (oQ-tRNA). The polypeptide is S-adenosylmethionine:tRNA ribosyltransferase-isomerase (Latilactobacillus sakei subsp. sakei (strain 23K) (Lactobacillus sakei subsp. sakei)).